We begin with the raw amino-acid sequence, 391 residues long: 5-amino-6-(D-ribitylamino)uracil--L-tyrosine 4-hydroxyphenyl transferase (391 aa).

In terms of domain architecture, Radical SAM core spans 55 to 302; that stretch reads VTYVINRNIN…GAVARIYLGN (248 aa). [4Fe-4S] cluster is bound by residues Cys69, Cys73, and Cys76.

This sequence belongs to the radical SAM superfamily. CofH family. As to quaternary structure, consists of two subunits, CofG and CofH. [4Fe-4S] cluster serves as cofactor.

The catalysed reaction is 5-amino-6-(D-ribitylamino)uracil + L-tyrosine + S-adenosyl-L-methionine = 5-amino-5-(4-hydroxybenzyl)-6-(D-ribitylimino)-5,6-dihydrouracil + 2-iminoacetate + 5'-deoxyadenosine + L-methionine + H(+). It participates in cofactor biosynthesis; coenzyme F0 biosynthesis. Its function is as follows. Catalyzes the radical-mediated synthesis of 5-amino-5-(4-hydroxybenzyl)-6-(D-ribitylimino)-5,6-dihydrouracil from 5-amino-6-(D-ribitylamino)uracil and L-tyrosine. This chain is 5-amino-6-(D-ribitylamino)uracil--L-tyrosine 4-hydroxyphenyl transferase, found in Trichormus variabilis (strain ATCC 29413 / PCC 7937) (Anabaena variabilis).